A 504-amino-acid polypeptide reads, in one-letter code: Maturase K (504 aa).

It belongs to the intron maturase 2 family. MatK subfamily.

The protein resides in the plastid. Its subcellular location is the chloroplast. Functionally, usually encoded in the trnK tRNA gene intron. Probably assists in splicing its own and other chloroplast group II introns. The sequence is that of Maturase K from Carpinus betulus (European hornbeam).